The sequence spans 419 residues: Creatine kinase S-type, mitochondrial (419 aa).

The N-terminal 39 residues, 1–39, are a transit peptide targeting the mitochondrion; that stretch reads MASAFSKLLTGRNASLLFTTLGTSALTTGYLLNRQKVSA. The segment at 40–64 is cardiolipin-binding; it reads DAREQHKLFPPSADYPDLRKHNNCM. Residues 46 to 132 form the Phosphagen kinase N-terminal domain; sequence KLFPPSADYP…FDPVIKLRHN (87 aa). The Phosphagen kinase C-terminal domain maps to 159 to 401; that stretch reads YVLSSRVRTG…NYLVDCEKKL (243 aa). ATP contacts are provided by residues 162 to 166 and H225; that span reads SSRVR. Y255 carries the phosphotyrosine modification. ATP is bound by residues R270, R326, 354 to 359, and D369; that span reads RGTGGV. T356 is subject to Phosphothreonine.

Belongs to the ATP:guanido phosphotransferase family. In terms of assembly, exists as an octamer composed of four CKMT2 homodimers. In terms of tissue distribution, sarcomere-specific. Found only in heart and skeletal muscles.

Its subcellular location is the mitochondrion inner membrane. It carries out the reaction creatine + ATP = N-phosphocreatine + ADP + H(+). Reversibly catalyzes the transfer of phosphate between ATP and various phosphogens (e.g. creatine phosphate). Creatine kinase isoenzymes play a central role in energy transduction in tissues with large, fluctuating energy demands, such as skeletal muscle, heart, brain and spermatozoa. The polypeptide is Creatine kinase S-type, mitochondrial (Ckmt2) (Rattus norvegicus (Rat)).